The chain runs to 445 residues: MERAPPDGLMNASGALAGEAAAAAGGARTFSAAWTAVLAALMALLIVATVLGNALVMLAFVADSSLRTQNNFFLLNLAISDFLVGVFCIPLYVPYVLTGRWTFGRGLCKLWLVVDYLLCTSSVFNIVLISYDRFLSVTRAVSYRAQQGDTRRAVRKMVLVWVLAFLLYGPAILSWEYLSGGSSIPEGHCYAEFFYNWYFLITASTLEFFTPFLSVTFFNLSIYLNIQRRTRLRLDGGAREAGPDPLPEAQSSPPQPPPGCWGCWPKGQGESMPLHRYGVGEAGPGAEAGEAALGGGSGAAASPTSSSGSSSRGTERPRSLKRGSKPSASSASLEKRMKMVSQSITQRFRLSRDKKVAKSLAIIVSIFGLCWAPYTLLMIIRAACHGHCVPDYWYETSFWLLWANSAVNPVLYPLCHYSFRRAFTKLLCPQKLKVQPHSSLEHCWK.

Residues Met1 to Ala40 are Extracellular-facing. N-linked (GlcNAc...) asparagine glycosylation is present at Asn11. The helical transmembrane segment at Leu41–Val61 threads the bilayer. At Ala62–Asn71 the chain is on the cytoplasmic side. A helical membrane pass occupies residues Phe72–Tyr92. Topologically, residues Val93–Lys109 are extracellular. The cysteines at positions 108 and 189 are disulfide-linked. Residues Leu110–Ser130 traverse the membrane as a helical segment. The Cytoplasmic segment spans residues Tyr131–Met157. The helical transmembrane segment at Val158–Leu178 threads the bilayer. The Extracellular segment spans residues Ser179–Trp197. The chain crosses the membrane as a helical span at residues Tyr198–Phe218. Residues Asn219–Ser359 lie on the Cytoplasmic side of the membrane. Disordered stretches follow at residues Gly236–Trp264 and Ala288–Arg336. Residues Ala299 to Arg312 show a composition bias toward low complexity. Residues Leu360–Ile380 traverse the membrane as a helical segment. The Extracellular portion of the chain corresponds to Arg381–Phe398. Residues Trp399–Phe419 form a helical membrane-spanning segment. Residues Arg420 to Lys445 are Cytoplasmic-facing. At Ser439 the chain carries Phosphoserine.

It belongs to the G-protein coupled receptor 1 family. As to expression, expressed widely and abundantly throughout the brain. Highly expressed in discrete neuronal populations such as pyramidal cells in cerebral cortex or cerebellar Purkinje cells.

Its subcellular location is the cell membrane. Functionally, the H3 subclass of histamine receptors could mediate the histamine signals in CNS and peripheral nervous system. Signals through the inhibition of adenylate cyclase and displays high constitutive activity (spontaneous activity in the absence of agonist). This Cavia porcellus (Guinea pig) protein is Histamine H3 receptor (HRH3).